The primary structure comprises 316 residues: tRNA dimethylallyltransferase (316 aa).

Position 17-24 (17-24 (GPTASGKT)) interacts with ATP. 19 to 24 (TASGKT) is a binding site for substrate. 3 interaction with substrate tRNA regions span residues 42–45 (DSAL), 166–170 (QRLSR), and 247–252 (RCVGYR).

The protein belongs to the IPP transferase family. Monomer. Mg(2+) serves as cofactor.

It catalyses the reaction adenosine(37) in tRNA + dimethylallyl diphosphate = N(6)-dimethylallyladenosine(37) in tRNA + diphosphate. Its function is as follows. Catalyzes the transfer of a dimethylallyl group onto the adenine at position 37 in tRNAs that read codons beginning with uridine, leading to the formation of N6-(dimethylallyl)adenosine (i(6)A). This Salmonella paratyphi C (strain RKS4594) protein is tRNA dimethylallyltransferase.